Consider the following 451-residue polypeptide: DNA double-strand break repair protein Mre11 (451 aa).

Mn(2+) contacts are provided by aspartate 8, histidine 10, aspartate 49, and asparagine 84. The Proton donor role is filled by histidine 85. Histidine 168, histidine 198, and histidine 200 together coordinate Mn(2+). The disordered stretch occupies residues 374–451; the sequence is REDNPPDLGD…GRPSLDRWIG (78 aa). Acidic residues predominate over residues 396-416; that stretch reads GSEESSEEPEESDGEEVGLEV.

The protein belongs to the MRE11/RAD32 family. In terms of assembly, homodimer. Forms a heterotetramer composed of two Mre11 subunits and two Rad50 subunits. It depends on Mn(2+) as a cofactor.

With respect to regulation, nuclease activity is regulated by Rad50. Part of the Rad50/Mre11 complex, which is involved in the early steps of DNA double-strand break (DSB) repair. The complex may facilitate opening of the processed DNA ends to aid in the recruitment of HerA and NurA. Mre11 binds to DSB ends and has both double-stranded 3'-5' exonuclease activity and single-stranded endonuclease activity. The protein is DNA double-strand break repair protein Mre11 of Methanopyrus kandleri (strain AV19 / DSM 6324 / JCM 9639 / NBRC 100938).